The sequence spans 205 residues: GTP cyclohydrolase 1 (205 aa).

The Zn(2+) site is built by Cys95, His98, and Cys166.

The protein belongs to the GTP cyclohydrolase I family. Toroid-shaped homodecamer, composed of two pentamers of five dimers.

It carries out the reaction GTP + H2O = 7,8-dihydroneopterin 3'-triphosphate + formate + H(+). Its pathway is cofactor biosynthesis; 7,8-dihydroneopterin triphosphate biosynthesis; 7,8-dihydroneopterin triphosphate from GTP: step 1/1. The polypeptide is GTP cyclohydrolase 1 (Maricaulis maris (strain MCS10) (Caulobacter maris)).